Consider the following 142-residue polypeptide: Malate dehydrogenase, mitochondrial (142 aa).

NAD(+)-binding positions include 1–6 and D26; that span reads ASGGIG. The substrate site is built by R73 and R79. NAD(+) is bound by residues N86 and 109 to 111; that span reads ITN. N111 is a binding site for substrate.

This sequence belongs to the LDH/MDH superfamily. MDH type 1 family. Homodimer.

It localises to the mitochondrion matrix. It carries out the reaction (S)-malate + NAD(+) = oxaloacetate + NADH + H(+). This Schistosoma mansoni (Blood fluke) protein is Malate dehydrogenase, mitochondrial.